The following is a 695-amino-acid chain: Elongation factor G 2 (695 aa).

Residues 5–280 (SKYRNIGIFA…AVVDYLPSPT (276 aa)) form the tr-type G domain. GTP-binding positions include 14 to 21 (AHVDAGKT), 78 to 82 (DTPGH), and 132 to 135 (NKLD).

Belongs to the TRAFAC class translation factor GTPase superfamily. Classic translation factor GTPase family. EF-G/EF-2 subfamily.

It localises to the cytoplasm. Functionally, catalyzes the GTP-dependent ribosomal translocation step during translation elongation. During this step, the ribosome changes from the pre-translocational (PRE) to the post-translocational (POST) state as the newly formed A-site-bound peptidyl-tRNA and P-site-bound deacylated tRNA move to the P and E sites, respectively. Catalyzes the coordinated movement of the two tRNA molecules, the mRNA and conformational changes in the ribosome. This Vibrio vulnificus (strain YJ016) protein is Elongation factor G 2.